A 1178-amino-acid chain; its full sequence is Mediator of RNA polymerase II transcription subunit 14 (1178 aa).

Residues 1-12 (MDNSVHNNSNTT) are compositionally biased toward polar residues. Disordered regions lie at residues 1-50 (MDNS…PITV) and 1064-1178 (LAGT…VVLD). Composition is skewed to low complexity over residues 1074–1112 (PTQI…QGAA) and 1119–1164 (HQLQ…AQQR).

This sequence belongs to the Mediator complex subunit 14 family. Component of the Mediator complex.

The protein localises to the nucleus. Functionally, component of the Mediator complex, a coactivator involved in the regulated transcription of nearly all RNA polymerase II-dependent genes. Mediator functions as a bridge to convey information from gene-specific regulatory proteins to the basal RNA polymerase II transcription machinery. Mediator is recruited to promoters by direct interactions with regulatory proteins and serves as a scaffold for the assembly of a functional preinitiation complex with RNA polymerase II and the general transcription factors. In Chaetomium globosum (strain ATCC 6205 / CBS 148.51 / DSM 1962 / NBRC 6347 / NRRL 1970) (Soil fungus), this protein is Mediator of RNA polymerase II transcription subunit 14 (RGR1).